The sequence spans 97 residues: Sm-like protein LSM3A (97 aa).

The residue at position 2 (S2) is an N-acetylserine. A Sm domain is found at 11–96; the sequence is EPLDLIRLSI…VILVSPPLRT (86 aa).

The protein belongs to the snRNP Sm proteins family. In terms of assembly, component of the heptameric LSM1-LSM7 complex that forms a seven-membered ring structure with a donut shape. The LSM subunits are arranged in the order LSM1, LSM2, LSM3, LSM6, LSM5, LSM7 and LSM4. Component of the heptameric LSM2-LSM8 complex that forms a seven-membered ring structure with a donut shape. The LSM subunits are arranged in the order LSM8, LSM2, LSM3, LSM6, LSM5, LSM7 and LSM4. LSM3A subunit interacts only with its two neighboring subunits, LSM2 and LSM6A or LSM6B. Expressed in roots, leaves, stems, flowers and siliques.

The protein resides in the cytoplasm. It localises to the nucleus. Component of LSM protein complexes, which are involved in RNA processing. Component of the cytoplasmic LSM1-LSM7 complex which is involved in mRNA degradation by promoting decapping and leading to accurate 5'-3' mRNA decay. The cytoplasmic LSM1-LSM7 complex regulates developmental gene expression by the decapping of specific development-related transcripts. Component of the nuclear LSM2-LSM8 complex which is involved splicing nuclear mRNAs. LSM2-LSM8 binds directly to the U6 small nuclear RNAs (snRNAs) and is essential for accurate splicing of selected development-related mRNAs through the stabilization of the spliceosomal U6 snRNA. Plays a critical role in the regulation of development-related gene expression. The chain is Sm-like protein LSM3A from Arabidopsis thaliana (Mouse-ear cress).